The sequence spans 692 residues: Elongation factor G (692 aa).

Residues 8–282 enclose the tr-type G domain; that stretch reads EKTRNIGIMA…AVVEYMPAPT (275 aa). GTP-binding positions include 17 to 24, 81 to 85, and 135 to 138; these read AHIDAGKT, DTPGH, and NKMD. Positions 285–304 are disordered; that stretch reads PNIKGVHPETGEADERHSSD. The segment covering 290 to 304 has biased composition (basic and acidic residues); that stretch reads VHPETGEADERHSSD.

Belongs to the TRAFAC class translation factor GTPase superfamily. Classic translation factor GTPase family. EF-G/EF-2 subfamily.

It is found in the cytoplasm. Catalyzes the GTP-dependent ribosomal translocation step during translation elongation. During this step, the ribosome changes from the pre-translocational (PRE) to the post-translocational (POST) state as the newly formed A-site-bound peptidyl-tRNA and P-site-bound deacylated tRNA move to the P and E sites, respectively. Catalyzes the coordinated movement of the two tRNA molecules, the mRNA and conformational changes in the ribosome. The sequence is that of Elongation factor G from Desulfitobacterium hafniense (strain Y51).